The sequence spans 320 residues: Elongation factor Ts (320 aa).

The involved in Mg(2+) ion dislocation from EF-Tu stretch occupies residues 82 to 85; it reads TDFV.

This sequence belongs to the EF-Ts family.

The protein localises to the cytoplasm. Associates with the EF-Tu.GDP complex and induces the exchange of GDP to GTP. It remains bound to the aminoacyl-tRNA.EF-Tu.GTP complex up to the GTP hydrolysis stage on the ribosome. This Flavobacterium johnsoniae (strain ATCC 17061 / DSM 2064 / JCM 8514 / BCRC 14874 / CCUG 350202 / NBRC 14942 / NCIMB 11054 / UW101) (Cytophaga johnsonae) protein is Elongation factor Ts.